Consider the following 376-residue polypeptide: Chaperone protein DnaJ (376 aa).

Positions 5–70 (DYYEILGVSK…QKRAAYDQYG (66 aa)) constitute a J domain. The CR-type zinc finger occupies 131–209 (GVTKEIRIPT…CHGHGRVERS (79 aa)). Positions 144, 147, 161, 164, 183, 186, 197, and 200 each coordinate Zn(2+). CXXCXGXG motif repeat units lie at residues 144 to 151 (CDVCHGSG), 161 to 168 (CPTCHGSG), 183 to 190 (CPHCQGRG), and 197 to 204 (CNKCHGHG).

This sequence belongs to the DnaJ family. As to quaternary structure, homodimer. The cofactor is Zn(2+).

Its subcellular location is the cytoplasm. In terms of biological role, participates actively in the response to hyperosmotic and heat shock by preventing the aggregation of stress-denatured proteins and by disaggregating proteins, also in an autonomous, DnaK-independent fashion. Unfolded proteins bind initially to DnaJ; upon interaction with the DnaJ-bound protein, DnaK hydrolyzes its bound ATP, resulting in the formation of a stable complex. GrpE releases ADP from DnaK; ATP binding to DnaK triggers the release of the substrate protein, thus completing the reaction cycle. Several rounds of ATP-dependent interactions between DnaJ, DnaK and GrpE are required for fully efficient folding. Also involved, together with DnaK and GrpE, in the DNA replication of plasmids through activation of initiation proteins. The polypeptide is Chaperone protein DnaJ (Escherichia coli (strain K12 / DH10B)).